A 273-amino-acid chain; its full sequence is Putative pyruvate, phosphate dikinase regulatory protein (273 aa).

149-156 (GPSRTSKT) lines the ADP pocket.

It belongs to the pyruvate, phosphate/water dikinase regulatory protein family. PDRP subfamily.

The catalysed reaction is N(tele)-phospho-L-histidyl/L-threonyl-[pyruvate, phosphate dikinase] + ADP = N(tele)-phospho-L-histidyl/O-phospho-L-threonyl-[pyruvate, phosphate dikinase] + AMP + H(+). The enzyme catalyses N(tele)-phospho-L-histidyl/O-phospho-L-threonyl-[pyruvate, phosphate dikinase] + phosphate + H(+) = N(tele)-phospho-L-histidyl/L-threonyl-[pyruvate, phosphate dikinase] + diphosphate. Bifunctional serine/threonine kinase and phosphorylase involved in the regulation of the pyruvate, phosphate dikinase (PPDK) by catalyzing its phosphorylation/dephosphorylation. The polypeptide is Putative pyruvate, phosphate dikinase regulatory protein (Rickettsia africae (strain ESF-5)).